The sequence spans 269 residues: tRNA uridine(34) hydroxylase (269 aa).

The Rhodanese domain occupies 122 to 216 (QDPEVVLIDV…YLEAIAPEEN (95 aa)). Residue Cys-176 is the Cysteine persulfide intermediate of the active site.

The protein belongs to the TrhO family.

It catalyses the reaction uridine(34) in tRNA + AH2 + O2 = 5-hydroxyuridine(34) in tRNA + A + H2O. Catalyzes oxygen-dependent 5-hydroxyuridine (ho5U) modification at position 34 in tRNAs. This chain is tRNA uridine(34) hydroxylase, found in Synechococcus elongatus (strain ATCC 33912 / PCC 7942 / FACHB-805) (Anacystis nidulans R2).